We begin with the raw amino-acid sequence, 1038 residues long: E3 ubiquitin-protein ligase Topors (1038 aa).

The interval 53–96 is disordered; the sequence is ESGSESGDNEAEEPVSAGPDNANAIGEPGTSASAAEENGTVERN. The segment at 102 to 141 adopts an RING-type zinc-finger fold; the sequence is CAICLSRCRRKCFTDSCMHQFCFKCLCEWSKIKPECPLCK. Residues 495–682 are interaction with hairy/hry; the sequence is AAANAEVAAI…SSDSSTTNSE (188 aa). 2 disordered regions span residues 627–858 and 972–1038; these read DQLR…SSTA and GESE…LLPY. A compositionally biased stretch (basic residues) spans 633–642; that stretch reads RSIRSKKSRR. Positions 643 to 668 are enriched in low complexity; that stretch reads SSMPARSDSGSSPSSCSSSSFHFSSS. Residues 686–699 are compositionally biased toward basic residues; it reads KKSRKRVANNKRSK. Residues 723-744 show a composition bias toward low complexity; that stretch reads QQQISQKKPQRQPESSSDSPSS. Over residues 792 to 801 the composition is skewed to basic and acidic residues; that stretch reads ATLEDRKPVK. T820 is subject to Phosphothreonine. S822 carries the post-translational modification Phosphoserine. Over residues 841–858 the composition is skewed to low complexity; sequence SHSNQSSQSASLASSSTA. The span at 987-1031 shows a compositional bias: acidic residues; sequence EEQDEEDEEDEDQEEDDQEEEKAAEEEEEEEEDDDDSDNHDENDE.

In terms of assembly, interacts with hairy/hry, p53 and Top1. Interacts with the gypsy chromatin insulator complex, composed of Cp190, mod(mdg4) and su(Hw); interacts directly with mod(mdg4) and su(Hw). Interacts with Lam/lamin.

It localises to the nucleus. The protein localises to the chromosome. It catalyses the reaction S-ubiquitinyl-[E2 ubiquitin-conjugating enzyme]-L-cysteine + [acceptor protein]-L-lysine = [E2 ubiquitin-conjugating enzyme]-L-cysteine + N(6)-ubiquitinyl-[acceptor protein]-L-lysine.. Functionally, functions as a ubiquitin-protein E3 ligase. Negatively regulates the transcriptional repressor hairy/hry by promoting its ubiquitination and subsequent degradation. Also directs the nuclear organization of the gypsy chromatin insulator. Chromatin insulators are regulatory elements which establish independent domains of transcriptional activity within eukaryotic genomes. Insulators have two defining properties; they can block the communication between an enhancer and a promoter when placed between them, and can also buffer transgenes from position effect variegation (PEV). Insulators are proposed to structure the chromatin fiber into independent domains of differing transcriptional potential by promoting the formation of distinct chromatin loops. This chromatin looping may require the formation of insulator bodies, where homotypic interactions between individual subunits of the insulator complex could promote the clustering of widely spaced insulators at the nuclear periphery. Within the gypsy insulator complex, this protein may promote formation of nuclear insulator bodies by recruiting individual insulator complexes to the nuclear lamina. This chain is E3 ubiquitin-protein ligase Topors (Topors), found in Drosophila melanogaster (Fruit fly).